Reading from the N-terminus, the 141-residue chain is VLSSTDKSNVKAAWDKVGGNVGEYGAEALERMFLSFPTTKTYFPHFDLAHGSSQVKAHGKKVGDALTNAVGHMDDLPGALSALSDLHAYKLRVDPVNFKLLSHCLLVTLANHLPNDFTPAVHASLDKFLASVSTVLTSKYR.

The Globin domain maps to 1-141 (VLSSTDKSNV…VSTVLTSKYR (141 aa)). Ser-3 is subject to Phosphoserine. N6-succinyllysine is present on residues Lys-7 and Lys-11. Lys-16 carries the post-translational modification N6-acetyllysine; alternate. An N6-succinyllysine; alternate modification is found at Lys-16. The residue at position 24 (Tyr-24) is a Phosphotyrosine. A Phosphoserine modification is found at Ser-35. Lys-40 carries the N6-succinyllysine modification. Residue His-58 participates in O2 binding. His-87 serves as a coordination point for heme b. Ser-102 is subject to Phosphoserine. Thr-108 is subject to Phosphothreonine. Phosphoserine is present on residues Ser-124 and Ser-131. Phosphothreonine occurs at positions 134 and 137. Phosphoserine is present on Ser-138.

The protein belongs to the globin family. In terms of assembly, heterotetramer of two alpha chains and two beta chains. As to expression, red blood cells.

Involved in oxygen transport from the lung to the various peripheral tissues. In terms of biological role, hemopressin acts as an antagonist peptide of the cannabinoid receptor CNR1. Hemopressin-binding efficiently blocks cannabinoid receptor CNR1 and subsequent signaling. The chain is Hemoglobin subunit alpha (HBA) from Pteropus poliocephalus (Grey-headed flying fox).